The chain runs to 69 residues: Mu-conotoxin-like Am3.1 (69 aa).

The first 20 residues, Met1–Ala20, serve as a signal peptide directing secretion. Positions Val21–Arg52 are excised as a propeptide. Residues Pro22–Glu43 are disordered. The span at Pro28 to Glu43 shows a compositional bias: basic and acidic residues. Pro66 carries the post-translational modification 4-hydroxyproline; partial; in minor form. Cys68 carries the cysteine amide modification.

Belongs to the conotoxin M family. In terms of processing, mostly non-hydroxylated. Post-translationally, contains 3 disulfide bonds. Expressed by the venom duct.

The protein resides in the secreted. Functionally, mu-conotoxins block voltage-gated sodium channels (Nav). The sequence is that of Mu-conotoxin-like Am3.1 from Conus amadis (Amadis cone).